The chain runs to 329 residues: MEVAEPSSPTEEEEEEEEHSAEPRPRTRSNPEGAEDRAVGAQASVGSRSEGEGEAASADDGSLNTSGAGPKSWQVPPPAPEVQIRTPRVNCPEKVIICLDLSEEMSLPKLESFNGSKTNALNVSQKMIEMFVRTKHKIDKSHEFALVVVNDDTAWLSGLTSDPRELCSCLYDLETASCSTFNLEGLFSLIQQKTELPVTENVQTIPPPYVVRTILVYSRPPCQPQFSLTEPMKKMFQCPYFFFDVVYIHNGTEEKEEEMSWKDMFAFMGSLDTKGTSYKYEVALAGPALELHNCMAKLLAHPLQRPCQSHASYSLLEEEDEAIEVEATV.

At M1 the chain carries N-acetylmethionine. The interval M1 to I84 is disordered. S8 is modified (phosphoserine). A compositionally biased stretch (acidic residues) spans T10–H19. 4 positions are modified to phosphoserine: S29, S49, S57, and S62. Position 65 is a phosphothreonine (T65). S66 is modified (phosphoserine). Positions V95–L298 are VWFA-like.

The protein belongs to the BABAM1 family. Component of the ARISC complex, at least composed of UIMC1/RAP80, ABRAXAS1, BRCC3/BRCC36, BABAM2 and BABAM1/NBA1. Component of the BRCA1-A complex, at least composed of BRCA1, BARD1, UIMC1/RAP80, ABRAXAS1, BRCC3/BRCC36, BABAM2 and BABAM1/NBA1. In the BRCA1-A complex, interacts directly with ABRAXAS1 and BABAM2. Component of the BRISC complex, at least composed of ABRAXAS2, BRCC3/BRCC36, BABAM2 and BABAM1/NBA1. Identified in a complex with SHMT2 and the other subunits of the BRISC complex.

The protein localises to the cytoplasm. Its subcellular location is the nucleus. Functionally, component of the BRCA1-A complex, a complex that specifically recognizes 'Lys-63'-linked ubiquitinated histones H2A and H2AX at DNA lesions sites, leading to target the BRCA1-BARD1 heterodimer to sites of DNA damage at double-strand breaks (DSBs). The BRCA1-A complex also possesses deubiquitinase activity that specifically removes 'Lys-63'-linked ubiquitin on histones H2A and H2AX. In the BRCA1-A complex, it is required for the complex integrity and its localization at DSBs. Component of the BRISC complex, a multiprotein complex that specifically cleaves 'Lys-63'-linked ubiquitin in various substrates. In these 2 complexes, it is probably required to maintain the stability of BABAM2 and help the 'Lys-63'-linked deubiquitinase activity mediated by BRCC3/BRCC36 component. The BRISC complex is required for normal mitotic spindle assembly and microtubule attachment to kinetochores via its role in deubiquitinating NUMA1. Plays a role in interferon signaling via its role in the deubiquitination of the interferon receptor IFNAR1; deubiquitination increases IFNAR1 activity by enhancing its stability and cell surface expression. Down-regulates the response to bacterial lipopolysaccharide (LPS) via its role in IFNAR1 deubiquitination. This is BRISC and BRCA1-A complex member 1 (BABAM1) from Homo sapiens (Human).